The following is a 196-amino-acid chain: Probable thymidylate kinase (196 aa).

ATP is bound at residue 9 to 16 (GIDGSGKT).

Belongs to the thymidylate kinase family.

It catalyses the reaction dTMP + ATP = dTDP + ADP. The chain is Probable thymidylate kinase from Methanococcus aeolicus (strain ATCC BAA-1280 / DSM 17508 / OCM 812 / Nankai-3).